A 293-amino-acid chain; its full sequence is Glycerophosphodiester phosphodiesterase (293 aa).

The signal sequence occupies residues 1–26 (MRKNRILALFVLSLGLLSFMVTPVSA). A GP-PDE domain is found at 38–290 (ILTVAHRGAS…NYPDLFHKVK (253 aa)). Catalysis depends on H43, which acts as the Proton acceptor. Sn-glycerol 3-phosphate contacts are provided by H43, R44, and E70. Ca(2+) is bound by residues E70 and D72. The sn-glycerol 3-phosphate site is built by H85, E152, and Q188. H85 (proton donor) is an active-site residue. E152 is a binding site for Ca(2+).

The protein belongs to the glycerophosphoryl diester phosphodiesterase family. Requires Ca(2+) as cofactor.

It is found in the secreted. It carries out the reaction a sn-glycero-3-phosphodiester + H2O = an alcohol + sn-glycerol 3-phosphate + H(+). In terms of biological role, glycerophosphodiester phosphodiesterase hydrolyzes glycerophosphodiesters into glycerol-3-phosphate (G3P) and the corresponding alcohol. Involved in wall teichoic acid (WTA) metabolism during phosphate starvation. Catalyzes the degradation of WTA, enabling the utilization of WTA as a phosphate reserve under limiting conditions. Is highly selective for the poly(gylcerol phosphate) WTA backbone and catalyzes exolytic cleavage of individual monomer units. In vitro is active toward the WTA oligomer mimics glycerophosphoglycerol (GPG) and bis-glycerophosphoglycerol (bGPG). This is Glycerophosphodiester phosphodiesterase from Bacillus subtilis (strain 168).